The primary structure comprises 553 residues: RNA exonuclease 1 (553 aa).

S24 bears the Phosphoserine mark. Positions 167–194 (MEKINKLKELQKKKKITINDLVLSEQQL) form a coiled coil. An Exonuclease domain is found at 225 to 373 (IFALDCEMCL…EDARACLELT (149 aa)). Positions 509-533 (WNNLSTELEFIQDKKERLDKRRERE) form a coiled coil.

Belongs to the REXO1/REXO3 family.

It is found in the nucleus. Functionally, 3' exoribonuclease required for 5S rRNA maturation and for the proper maturation of the 5' cistron of the tRNA-Arg3 dicistronic gene. Involved with REX2 in the maturation of the 5.8S rRNA, and with REX2 and REX3, in the 3' processing of the U5L snRNA. This Saccharomyces cerevisiae (strain ATCC 204508 / S288c) (Baker's yeast) protein is RNA exonuclease 1 (RNH70).